Reading from the N-terminus, the 240-residue chain is MPSGVRRRKMNRSSITKVTRKDKDNHKRIVVTGSDIIRQRWDKNLSMAQNYKKLGLATKTGSRKIRGLEEDLREKSLRLTIQQGKNPHDQELRDLMEQQEQEELEKSNLVVNERKIPKLGAGEAFIVRDDKGEVVEVIYGKDHQTGSDEEDEEEWTGFEDKPEEEETETIKILQERAKRAASNPHVQSDREQSWIEQLINKHGDDIDGMFWDKELNIYQQSRGDLKRRIKKWKQGNKRNQ.

The segment covering 1–11 (MPSGVRRRKMN) has biased composition (basic residues). 2 disordered regions span residues 1-26 (MPSGVRRRKMNRSSITKVTRKDKDNH) and 143-166 (HQTGSDEEDEEEWTGFEDKPEEEE). The span at 147-166 (SDEEDEEEWTGFEDKPEEEE) shows a compositional bias: acidic residues.

This sequence belongs to the NOP16 family. In terms of assembly, component of the pre-66S ribosomal particle.

The protein resides in the nucleus. The protein localises to the nucleolus. Functionally, involved in the biogenesis of the 60S ribosomal subunit. The polypeptide is Nucleolar protein 16 (NOP16) (Yarrowia lipolytica (strain CLIB 122 / E 150) (Yeast)).